The chain runs to 357 residues: UPF0283 membrane protein BMEA_A1074 (357 aa).

The segment at 1 to 36 (MSDKTPRKPTAFRLEQPARVSAASEQEEPRRPRAVK) is disordered. The span at 27 to 36 (EEPRRPRAVK) shows a compositional bias: basic and acidic residues. 2 helical membrane passes run 78 to 98 (ILFG…TEDL) and 109 to 129 (LGWT…AIIL).

The protein belongs to the UPF0283 family.

The protein resides in the cell inner membrane. This is UPF0283 membrane protein BMEA_A1074 from Brucella melitensis biotype 2 (strain ATCC 23457).